The sequence spans 839 residues: Transcription regulator protein BACH2 (839 aa).

Residues 37 to 103 enclose the BTB domain; it reads CDVTLIVERK…AYTAKLLLSR (67 aa). 2 disordered regions span residues 150-170 and 247-331; these read QRPQ…EETM and HGTS…LDRS. The span at 161–170 shows a compositional bias: acidic residues; it reads GEEEEEEETM. A compositionally biased stretch (polar residues) spans 247 to 263; the sequence is HGTSGFASTFSEDSPGN. A compositionally biased stretch (basic and acidic residues) spans 297-312; sequence TDIKDRPGDVEMDRKQ. Serine 314 carries the post-translational modification Phosphoserine. Residues 321–331 show a composition bias toward low complexity; sequence TPTGAACLDRS. Residues lysine 381 and lysine 420 each participate in a glycyl lysine isopeptide (Lys-Gly) (interchain with G-Cter in SUMO2) cross-link. Phosphoserine is present on serine 520. The segment at 582–609 is disordered; sequence QSYGTNSSDESGSFSEADSESCPVQDRG. Polar residues predominate over residues 583–597; that stretch reads SYGTNSSDESGSFSE. Residues 645 to 708 enclose the bZIP domain; sequence FIHDIRRRSK…GELLDNFSCL (64 aa). The tract at residues 650–666 is basic motif; it reads RRRSKNRIAAQRCRKRK. Positions 670–677 are leucine-zipper; sequence IQNLECEI. Residues 778-813 are disordered; the sequence is PWVPSNTSENCTSGRRLEGSDPGTFSERGPPLEARS. A compositionally biased stretch (polar residues) spans 781 to 790; it reads PSNTSENCTS. A Nuclear export signal motif is present at residues 819-839; the sequence is DFCQEMTEKCTTDEQPRKDYA.

The protein belongs to the bZIP family. CNC subfamily. As to quaternary structure, homodimer; disulfide-linked. Heterodimer of BACH2 and Maf-related transcription factors. In terms of processing, the reversible disulfide bond may provide a mechanism to regulate the activity in oxidative stress responses. Phosphorylation at Ser-520 downstream of the PI-3K pathway promotes nuclear export. As to expression, detected in brain and spleen.

Its subcellular location is the cytoplasm. It is found in the nucleus. Its function is as follows. Transcriptional regulator that acts as a repressor or activator. Binds to Maf recognition elements (MARE). Plays an important role in coordinating transcription activation and repression by MAFK. Induces apoptosis in response to oxidative stress through repression of the antiapoptotic factor HMOX1. Positively regulates the nuclear import of actin. Is a key regulator of adaptive immunity, crucial for the maintenance of regulatory T-cell function and B-cell maturation. The sequence is that of Transcription regulator protein BACH2 (Bach2) from Mus musculus (Mouse).